Here is a 459-residue protein sequence, read N- to C-terminus: Inositol-trisphosphate 3-kinase A (459 aa).

The tract at residues methionine 1–arginine 29 is disordered. Omega-N-methylarginine is present on residues arginine 35, arginine 55, and arginine 62. The segment at alanine 49–histidine 164 is disordered. A compositionally biased stretch (low complexity) spans arginine 116 to leucine 132. Serine 135 and serine 195 each carry phosphoserine. ATP-binding positions include serine 195, lysine 207, glutamine 247–leucine 249, and aspartate 260. Residues lysine 262 and arginine 283 each coordinate substrate. The tract at residues aspartate 285–valine 293 is calmodulin-binding. Substrate is bound at residue lysine 310 to arginine 317. ATP-binding residues include lysine 334 and aspartate 414. A substrate-binding site is contributed by lysine 417.

The protein belongs to the inositol phosphokinase (IPK) family.

The protein localises to the cytoplasm. Its subcellular location is the cytoskeleton. The catalysed reaction is 1D-myo-inositol 1,4,5-trisphosphate + ATP = 1D-myo-inositol 1,3,4,5-tetrakisphosphate + ADP + H(+). With respect to regulation, activated by calcium/calmodulin. Catalyzes the phosphorylation of 1D-myo-inositol 1,4,5-trisphosphate (InsP3) into 1D-myo-inositol 1,3,4,5-tetrakisphosphate and participates to the regulation of calcium homeostasis. The polypeptide is Inositol-trisphosphate 3-kinase A (Mus musculus (Mouse)).